The following is a 716-amino-acid chain: Polyribonucleotide nucleotidyltransferase (716 aa).

Mg(2+) contacts are provided by Asp490 and Asp496. In terms of domain architecture, KH spans 556–615; the sequence is PKIETLTIPTDKIREVIGSGGKVIREIVETSGAKVDINDDGVIKIASNDQAAIKKAYDMI. The S1 motif domain maps to 625–693; that stretch reads GQIYTGKVVK…ERGKVRLGMK (69 aa). A disordered region spans residues 695-716; the sequence is VDQETGQEIQPEKKEREEAGEA. Residues 704-716 are compositionally biased toward basic and acidic residues; that stretch reads QPEKKEREEAGEA.

This sequence belongs to the polyribonucleotide nucleotidyltransferase family. Mg(2+) is required as a cofactor.

The protein resides in the cytoplasm. It carries out the reaction RNA(n+1) + phosphate = RNA(n) + a ribonucleoside 5'-diphosphate. Involved in mRNA degradation. Catalyzes the phosphorolysis of single-stranded polyribonucleotides processively in the 3'- to 5'-direction. The sequence is that of Polyribonucleotide nucleotidyltransferase from Cereibacter sphaeroides (strain KD131 / KCTC 12085) (Rhodobacter sphaeroides).